The chain runs to 530 residues: Tryptophan 7-halogenase RebH (530 aa).

FAD contacts are provided by Gly13, Thr15, Ala16, Ala39, Asp41, Glu49, and Ala50. Lys79 is an active-site residue. FAD contacts are provided by Val197 and Thr348. Glu357 lines the L-tryptophan pocket. Residues Thr359 and Gly360 each coordinate chloride. Ile361 contributes to the FAD binding site. Positions 454, 455, 461, and 465 each coordinate L-tryptophan.

It belongs to the flavin-dependent halogenase family. Bacterial tryptophan halogenase subfamily. As to quaternary structure, homodimer.

It carries out the reaction L-tryptophan + FADH2 + chloride + O2 = 7-chloro-L-tryptophan + FAD + 2 H2O. Its function is as follows. Involved in the biosynthesis of the indolocarbazole antitumor agent rebeccamycin. Catalyzes the chlorination of tryptophan (Trp) at C7 position to yield 7-chlorotryptophan. It is also able to use bromide ions to generate monobrominated Trp. The chain is Tryptophan 7-halogenase RebH (rebH) from Lentzea aerocolonigenes (Lechevalieria aerocolonigenes).